We begin with the raw amino-acid sequence, 336 residues long: Protein-lysine N-methyltransferase EFM3 (336 aa).

S-adenosyl-L-methionine contacts are provided by residues Trp-147, 173-175, Asp-196, Leu-232, and Ala-251; that span reads GTG.

This sequence belongs to the class I-like SAM-binding methyltransferase superfamily. EEF2KMT family.

The protein resides in the cytoplasm. Functionally, S-adenosyl-L-methionine-dependent protein-lysine N-methyltransferase that methylates elongation factor 2. This is Protein-lysine N-methyltransferase EFM3 from Chaetomium thermophilum (strain DSM 1495 / CBS 144.50 / IMI 039719) (Thermochaetoides thermophila).